The chain runs to 138 residues: Putative pre-16S rRNA nuclease (138 aa).

It belongs to the YqgF nuclease family.

Its subcellular location is the cytoplasm. In terms of biological role, could be a nuclease involved in processing of the 5'-end of pre-16S rRNA. This is Putative pre-16S rRNA nuclease from Polaromonas sp. (strain JS666 / ATCC BAA-500).